The sequence spans 788 residues: MAQAKKKSTAKKKTASKKRTNSRKKKNDNPIRYVIAILVVVLMVLGVFQLGIIGRLIDSFFNYLFGYSRYLTYILVLLATGFITYSKRIPKTRRTAGSIVLQIALLFVSQLVFHFNSGIKAEREPVLSYVYQSYQHSHFPNFGGGVLGFYLLELSVPLISLFGVCIITILLLCSSVILLTNHQHRDVAKVALENIKAWFGSFNEKMSERNQEKQLKREEKARLKEEQKARQNEQPQIKDVSDFTEVPQERDIPIYGHTENESKSQCQPSRKKRVFDAENSSNNIVNHQADQQEQLTEQTHNSVESENTIEEAGEVTNVSYVVPPLTLLNQPAKQKATSKAEVQRKGQVLENTLKDFGVNAKVTQIKIGPAVTQYEIQPAQGVKVSKIVNLHNDIALALAAKDVRIEAPIPGRSAVGIEVPNEKISLVSLKEVLDEKFPSNNKLEVGLGRDISGDPITVPLNEMPHLLVAGSTGSGKSVCINGIITSILLNAKPHEVKLMLIDPKMVELNVYNGIPHLLIPVVTNPHKAAQALEKIVAEMERRYDLFQHSSTRNIKGYNELIRKQNQELDEKQPELPYIVVIVDELADLMMVAGKEVENAIQRITQMARAAGIHLIVATQRPSVDVITGIIKNNIPSRIAFAVSSQTDSRTIIGTGGAEKLLGKGDMLYVGNGDSSQTRIQGAFLSDQEVQDVVNYVVEQQQANYVKEMEPDAPVDKSEMKSEDALYDEAYLFVVEQQKASTSLLQRQFRIGYNRASRLMDDLERNQVIGPQKGSKPRQVLIDLNNDEV.

Residues 1–25 (MAQAKKKSTAKKKTASKKRTNSRKK) are disordered. Helical transmembrane passes span 34–54 (VIAI…GIIG), 63–83 (YLFG…TGFI), 99–119 (IVLQ…NSGI), 137–157 (SHFP…LSVP), and 158–178 (LISL…SVIL). Topologically, residues 179 to 788 (LTNHQHRDVA…VLIDLNNDEV (610 aa)) are cytoplasmic. Composition is skewed to basic and acidic residues over residues 209–231 (RNQE…KARQ) and 253–262 (PIYGHTENES). Disordered regions lie at residues 209-244 (RNQE…SDFT) and 253-272 (PIYG…SRKK). A FtsK domain is found at 453-649 (GDPITVPLNE…FAVSSQTDSR (197 aa)). 473–478 (GSGKSV) contacts ATP.

This sequence belongs to the FtsK/SpoIIIE/SftA family. As to quaternary structure, homohexamer. Forms a ring that surrounds DNA.

It localises to the cell membrane. Its function is as follows. Essential cell division protein that coordinates cell division and chromosome segregation. The N-terminus is involved in assembly of the cell-division machinery. The C-terminus functions as a DNA motor that moves dsDNA in an ATP-dependent manner towards the dif recombination site, which is located within the replication terminus region. Required for activation of the Xer recombinase, allowing activation of chromosome unlinking by recombination. The polypeptide is DNA translocase FtsK (ftsK) (Staphylococcus aureus (strain Mu50 / ATCC 700699)).